Consider the following 437-residue polypeptide: UDP-glucosyl transferase 79L3 (437 aa).

H18 acts as the Proton acceptor in catalysis. The active-site Charge relay is D117. Residues S254, W312, V313, H330, S335, and E338 each coordinate UDP.

The protein belongs to the UDP-glycosyltransferase family. Mainly expressed in flowers, flower buds and young leaves, and, to a lesser extent, in old leaves, stems and roots.

It functions in the pathway secondary metabolite biosynthesis; terpenoid biosynthesis. Component of the oleanane-type triterpene saponins (e.g. saponarioside A and saponarioside B) biosynthetic pathway, leading to the production of natural products with detergent properties used as traditional sources of soap. A glycosyltransferase that mediates the conversion of QA-triFR to QA-triFRX via the elongation of the C-28 sugar chain with a D-xylose. In Saponaria officinalis (Common soapwort), this protein is UDP-glucosyl transferase 79L3.